The primary structure comprises 43 residues: Protein PsbN (43 aa).

A helical transmembrane segment spans residues 5 to 27; the sequence is TLVAISISCLLVSFTGYALYTAF.

It belongs to the PsbN family.

It is found in the plastid. Its subcellular location is the chloroplast thylakoid membrane. Functionally, may play a role in photosystem I and II biogenesis. This is Protein PsbN from Cryptomeria japonica (Japanese cedar).